We begin with the raw amino-acid sequence, 86 residues long: Exodeoxyribonuclease 7 small subunit (86 aa).

The interval 1 to 26 is disordered; that stretch reads MQDELFETEKIPPKNTKNTKNAPKKS.

The protein belongs to the XseB family. As to quaternary structure, heterooligomer composed of large and small subunits.

Its subcellular location is the cytoplasm. The catalysed reaction is Exonucleolytic cleavage in either 5'- to 3'- or 3'- to 5'-direction to yield nucleoside 5'-phosphates.. Functionally, bidirectionally degrades single-stranded DNA into large acid-insoluble oligonucleotides, which are then degraded further into small acid-soluble oligonucleotides. The polypeptide is Exodeoxyribonuclease 7 small subunit (Helicobacter pylori (strain ATCC 700392 / 26695) (Campylobacter pylori)).